The following is a 434-amino-acid chain: Eukaryotic peptide chain release factor subunit 1-2 (434 aa).

A2 is subject to N-acetylalanine.

This sequence belongs to the eukaryotic release factor 1 family. As to quaternary structure, heterodimer of two subunits, one of which binds GTP.

The protein resides in the cytoplasm. Directs the termination of nascent peptide synthesis (translation) in response to the termination codons UAA, UAG and UGA. Modulates plant growth and development. The sequence is that of Eukaryotic peptide chain release factor subunit 1-2 from Arabidopsis thaliana (Mouse-ear cress).